A 196-amino-acid chain; its full sequence is Nucleoside triphosphate pyrophosphatase (196 aa).

Asp-73 serves as the catalytic Proton acceptor.

Belongs to the Maf family. The cofactor is a divalent metal cation.

Its subcellular location is the cytoplasm. The catalysed reaction is a ribonucleoside 5'-triphosphate + H2O = a ribonucleoside 5'-phosphate + diphosphate + H(+). It carries out the reaction a 2'-deoxyribonucleoside 5'-triphosphate + H2O = a 2'-deoxyribonucleoside 5'-phosphate + diphosphate + H(+). Its function is as follows. Nucleoside triphosphate pyrophosphatase. May have a dual role in cell division arrest and in preventing the incorporation of modified nucleotides into cellular nucleic acids. This Maricaulis maris (strain MCS10) (Caulobacter maris) protein is Nucleoside triphosphate pyrophosphatase.